We begin with the raw amino-acid sequence, 908 residues long: Collagen alpha-2(I) chain (908 aa).

Positions 1-36 are enriched in low complexity; that stretch reads GPMGIMGPRGPPGASGAPGPAGEPGEPGQTGPAGAR. Disordered stretches follow at residues 1 to 211 and 227 to 908; these read GPMG…GITG and IPGP…PGPS. The segment covering 45-59 has biased composition (basic and acidic residues); it reads AGEDGHPGKPGRPGE. Composition is skewed to low complexity over residues 129–158, 183–197, 234–249, 293–309, 403–418, 465–474, 526–542, and 569–589; these read VGAP…SAGP, AGPR…VSGP, PGPV…RGIV, STGP…RGIP, AGIA…PGFQ, PAGPIGSRGP, RRGA…AGAN, and VGPA…QPGA. The span at 590 to 599 shows a compositional bias: basic and acidic residues; that stretch reads KGERGTKGPK. The span at 602 to 617 shows a compositional bias: low complexity; it reads NGPVGPTGPVGAAGPA. Gly residues predominate over residues 627 to 636; it reads GSRGDGGPPG. Low complexity-rich tracts occupy residues 637–647, 701–730, 745–775, and 785–805; these read ATGFPGAAGRT, AGEP…IPGS, EPGP…APGE, and PGPA…PSGP. Basic and acidic residues predominate over residues 809–820; that stretch reads RGDKGEPGDKGP. The segment covering 893-908 has biased composition (pro residues); it reads AGPPGPPGPPGPPGPS.

Belongs to the fibrillar collagen family. Trimers of one alpha 2(I) and two alpha 1(I) chains. Interacts (via C-terminus) with TMEM131 (via PapD-L domain); the interaction is direct and is involved in assembly and TRAPPIII ER-to-Golgi transport complex-dependent secretion of collagen. Post-translationally, prolines at the third position of the tripeptide repeating unit (G-X-Y) are hydroxylated in some or all of the chains. Forms the fibrils of tendon, ligaments and bones. In bones, the fibrils are mineralized with calcium hydroxyapatite.

The protein resides in the secreted. It localises to the extracellular space. The protein localises to the extracellular matrix. In terms of biological role, type I collagen is a member of group I collagen (fibrillar forming collagen). This is Collagen alpha-2(I) chain from Toxodon sp.